Reading from the N-terminus, the 395-residue chain is Probable inactive serine/threonine-protein kinase DDB_G0293746 (395 aa).

The 387-residue stretch at 9 to 395 (YSEIDLISDN…ITQFIIDYLF (387 aa)) folds into the Protein kinase domain. ATP-binding positions include 15-23 (ISDNPFKNY) and K54. The disordered stretch occupies residues 213–266 (NSSLSSLSSSTSSSSSSSSSTNCNNNTTENNNNNYNNNNNNNNNNNNNNNNNSL).

This sequence belongs to the protein kinase superfamily. Ser/Thr protein kinase family.

This is Probable inactive serine/threonine-protein kinase DDB_G0293746 from Dictyostelium discoideum (Social amoeba).